The sequence spans 86 residues: UPF0335 protein mll3968 (86 aa).

The protein belongs to the UPF0335 family.

In Mesorhizobium japonicum (strain LMG 29417 / CECT 9101 / MAFF 303099) (Mesorhizobium loti (strain MAFF 303099)), this protein is UPF0335 protein mll3968.